Reading from the N-terminus, the 352-residue chain is 2'-dehydrokanamycin reductase (352 aa).

The protein belongs to the NAD(P)-dependent epimerase/dehydratase family.

The enzyme catalyses 2'-dehydrokanamycin A + NADPH + H(+) = kanamycin A + NADP(+). Its pathway is antibiotic biosynthesis; kanamycin biosynthesis. Mediates the conversion of 2'-dehydrokanamycin A into kanamycin A. This is 2'-dehydrokanamycin reductase (kanK) from Streptomyces kanamyceticus.